Here is a 435-residue protein sequence, read N- to C-terminus: Zinc finger CCCH domain-containing protein 10 (435 aa).

A disordered region spans residues 1–36; it reads MPDRDSYANGTGSSGGGPGGGGSEEASGAGTGSGGA. Positions 12–35 are enriched in gly residues; it reads GSSGGGPGGGGSEEASGAGTGSGG. C3H1-type zinc fingers lie at residues 36–63, 73–99, and 134–161; these read ATSD…HPDM, KNEF…HGSK, and KEEV…HLQR. A disordered region spans residues 166-190; it reads DARGGGGTGGGGSTGSAPPGRRHDL. A compositionally biased stretch (gly residues) spans 168-179; sequence RGGGGTGGGGST. Arg186 and Arg187 each carry omega-N-methylarginine. The stretch at 235–281 forms a coiled coil; the sequence is GVECRLLEEENALLRKRVEELKKQVSNLLATNEVLLEQNAQFRNQAK. A compositionally biased stretch (polar residues) spans 315–331; sequence TTLSSQALQPRPVSQQE. The interval 315 to 363 is disordered; it reads TTLSSQALQPRPVSQQELVAPTGAPAAPPTNAAPPAAPPPPPPHLNPEI. Residues 340–359 show a composition bias toward pro residues; that stretch reads AAPPTNAAPPAAPPPPPPHL.

The protein localises to the nucleus. Its function is as follows. Specific regulator of miRNA biogenesis. Binds, via the C3H1-type zinc finger domains, to the binding motif 5'-GCAGCGC-3' on microRNA pri-MIR143 and negatively regulates the processing to mature microRNA. The chain is Zinc finger CCCH domain-containing protein 10 (Zc3h10) from Mus musculus (Mouse).